The primary structure comprises 407 residues: Peptidase T (407 aa).

A Zn(2+)-binding site is contributed by His81. Asp83 is a catalytic residue. Asp142 serves as a coordination point for Zn(2+). Glu176 acts as the Proton acceptor in catalysis. Positions 177, 199, and 381 each coordinate Zn(2+).

This sequence belongs to the peptidase M20B family. Zn(2+) serves as cofactor.

Its subcellular location is the cytoplasm. It carries out the reaction Release of the N-terminal residue from a tripeptide.. Functionally, cleaves the N-terminal amino acid of tripeptides. This is Peptidase T from Streptococcus pneumoniae (strain JJA).